A 184-amino-acid chain; its full sequence is Photosynthetic apparatus regulatory protein RegA (184 aa).

Positions 14-128 (SLLLVDDDEP…EVTHALLAKG (115 aa)) constitute a Response regulatory domain.

In terms of processing, phosphorylated by RegB.

Member of the two-component regulatory system RegB/RegA. Involved in transactivating anaerobic expression of the photosynthetic apparatus. It is a transcriptional regulator that is responsible for activating expression of the puf, puh, and puc operons in response to a decrease in oxygen tension. The protein is Photosynthetic apparatus regulatory protein RegA (regA) of Cereibacter sphaeroides (strain ATCC 17023 / DSM 158 / JCM 6121 / CCUG 31486 / LMG 2827 / NBRC 12203 / NCIMB 8253 / ATH 2.4.1.) (Rhodobacter sphaeroides).